Consider the following 555-residue polypeptide: Chaperonin GroEL 2 (555 aa).

Residues 29 to 32 (TLGP), 86 to 90 (DGTTT), glycine 414, 480 to 482 (NAL), and aspartate 496 each bind ATP.

This sequence belongs to the chaperonin (HSP60) family. Forms a cylinder of 14 subunits composed of two heptameric rings stacked back-to-back. Interacts with the co-chaperonin GroES.

It is found in the cytoplasm. The enzyme catalyses ATP + H2O + a folded polypeptide = ADP + phosphate + an unfolded polypeptide.. Together with its co-chaperonin GroES, plays an essential role in assisting protein folding. The GroEL-GroES system forms a nano-cage that allows encapsulation of the non-native substrate proteins and provides a physical environment optimized to promote and accelerate protein folding. In Synechococcus sp. (strain ATCC 27144 / PCC 6301 / SAUG 1402/1) (Anacystis nidulans), this protein is Chaperonin GroEL 2.